Consider the following 353-residue polypeptide: Photosystem II protein D1 (353 aa).

Thr2 is subject to N-acetylthreonine. Position 2 is a phosphothreonine (Thr2). 3 helical membrane passes run 29–46 (YIGW…TATA), 118–133 (HFLL…EWEL), and 142–156 (WIAV…AAAA). Position 118 (His118) interacts with chlorophyll a. Residue Tyr126 participates in pheophytin a binding. Positions 170 and 189 each coordinate [CaMn4O5] cluster. A helical transmembrane segment spans residues 197–218 (FHMLGVAGVFGGSLFSAMHGSL). A chlorophyll a-binding site is contributed by His198. A quinone-binding positions include His215 and 264-265 (SF). His215 lines the Fe cation pocket. Fe cation is bound at residue His272. The chain crosses the membrane as a helical span at residues 274 to 288 (FLAAWPVVGIWFTAL). [CaMn4O5] cluster contacts are provided by His332, Glu333, Asp342, and Ala344. Positions 345–353 (SVEAPSVNG) are excised as a propeptide.

Belongs to the reaction center PufL/M/PsbA/D family. PSII is composed of 1 copy each of membrane proteins PsbA, PsbB, PsbC, PsbD, PsbE, PsbF, PsbH, PsbI, PsbJ, PsbK, PsbL, PsbM, PsbT, PsbX, PsbY, PsbZ, Psb30/Ycf12, at least 3 peripheral proteins of the oxygen-evolving complex and a large number of cofactors. It forms dimeric complexes. The D1/D2 heterodimer binds P680, chlorophylls that are the primary electron donor of PSII, and subsequent electron acceptors. It shares a non-heme iron and each subunit binds pheophytin, quinone, additional chlorophylls, carotenoids and lipids. D1 provides most of the ligands for the Mn4-Ca-O5 cluster of the oxygen-evolving complex (OEC). There is also a Cl(-1) ion associated with D1 and D2, which is required for oxygen evolution. The PSII complex binds additional chlorophylls, carotenoids and specific lipids. serves as cofactor. Tyr-161 forms a radical intermediate that is referred to as redox-active TyrZ, YZ or Y-Z. In terms of processing, C-terminally processed by CTPA; processing is essential to allow assembly of the oxygen-evolving complex and thus photosynthetic growth.

Its subcellular location is the plastid. The protein localises to the chloroplast thylakoid membrane. It carries out the reaction 2 a plastoquinone + 4 hnu + 2 H2O = 2 a plastoquinol + O2. Photosystem II (PSII) is a light-driven water:plastoquinone oxidoreductase that uses light energy to abstract electrons from H(2)O, generating O(2) and a proton gradient subsequently used for ATP formation. It consists of a core antenna complex that captures photons, and an electron transfer chain that converts photonic excitation into a charge separation. The D1/D2 (PsbA/PsbD) reaction center heterodimer binds P680, the primary electron donor of PSII as well as several subsequent electron acceptors. This Huperzia lucidula (Shining clubmoss) protein is Photosystem II protein D1.